The sequence spans 274 residues: ATP synthase subunit a (274 aa).

The next 5 helical transmembrane spans lie at 43-63 (TLNIDSLFFSVVLGLAFLFVF), 103-123 (VIAPLALTVFVWVLLMNMMDL), 149-169 (DVSITLSMALGVFILILFYSI), 223-243 (LIFILIAGLLPWWSQWMLSLP), and 245-265 (AIFHILIITLQAFIFMVLTIV).

The protein belongs to the ATPase A chain family. In terms of assembly, F-type ATPases have 2 components, CF(1) - the catalytic core - and CF(0) - the membrane proton channel. CF(1) has five subunits: alpha(3), beta(3), gamma(1), delta(1), epsilon(1). CF(0) has three main subunits: a(1), b(2) and c(9-12). The alpha and beta chains form an alternating ring which encloses part of the gamma chain. CF(1) is attached to CF(0) by a central stalk formed by the gamma and epsilon chains, while a peripheral stalk is formed by the delta and b chains.

The protein localises to the cell inner membrane. Its function is as follows. Key component of the proton channel; it plays a direct role in the translocation of protons across the membrane. This chain is ATP synthase subunit a, found in Yersinia enterocolitica serotype O:8 / biotype 1B (strain NCTC 13174 / 8081).